A 165-amino-acid polypeptide reads, in one-letter code: Cyclic pyranopterin monophosphate synthase (165 aa).

Substrate-binding positions include 83-85 (FCH) and 120-121 (ME). Aspartate 135 is an active-site residue.

Belongs to the MoaC family. Homohexamer; trimer of dimers.

It carries out the reaction (8S)-3',8-cyclo-7,8-dihydroguanosine 5'-triphosphate = cyclic pyranopterin phosphate + diphosphate. It participates in cofactor biosynthesis; molybdopterin biosynthesis. Catalyzes the conversion of (8S)-3',8-cyclo-7,8-dihydroguanosine 5'-triphosphate to cyclic pyranopterin monophosphate (cPMP). In Xanthomonas campestris pv. campestris (strain B100), this protein is Cyclic pyranopterin monophosphate synthase.